The following is a 1339-amino-acid chain: Retrotransposon Gag-like protein 9 (1339 aa).

3 stretches are compositionally biased toward polar residues: residues 533 to 545, 679 to 693, and 700 to 711; these read TVPTSGSVSTQKT, SGTKSTSQMTATTSG, and TRLSGPGATSTP. 6 disordered regions span residues 533–555, 679–711, 845–864, 880–901, 982–1010, and 1078–1116; these read TVPTSGSVSTQKTRAPVSGPMST, SGTKSTSQMTATTSGGIFMPQTRLSGPGATSTP, GVMSIPLTRTPASRAKSRPQ, PATAGISPSPVRSPASSTLSTL, ATSLPQPRNAASGVIANPPQRAPASGAGS, and ATDSGEASTSHTRFTAPGSKSTPHMTSTAPEMKTPPPKE. Over residues 891–901 the composition is skewed to low complexity; sequence RSPASSTLSTL. A compositionally biased stretch (polar residues) spans 1078–1106; it reads ATDSGEASTSHTRFTAPGSKSTPHMTSTA.

This is Retrotransposon Gag-like protein 9 from Mus musculus (Mouse).